The sequence spans 136 residues: Small ribosomal subunit protein uS11 (136 aa).

This sequence belongs to the universal ribosomal protein uS11 family. As to quaternary structure, part of the 30S ribosomal subunit. Interacts with proteins S7 and S18. Binds to IF-3.

Functionally, located on the platform of the 30S subunit, it bridges several disparate RNA helices of the 16S rRNA. Forms part of the Shine-Dalgarno cleft in the 70S ribosome. The sequence is that of Small ribosomal subunit protein uS11 from Leptospira borgpetersenii serovar Hardjo-bovis (strain JB197).